Consider the following 307-residue polypeptide: MGGLRPWSRYGLLVVAHLLALGLGAVVFQALEGPPACRLQAELRAELAAFQAEHRACLPPGALEELLGTALATQAHGVSTLGNSSEGRTWDLPSALLFAASILTTTGYGHMAPLSPGGKAFCMVYAALGLPASLALVATLRHCLLPVLSRPRAWVAVHWQLSPARAALLQAVALGLLVASSFVLLPALVLWGLQGDCSLLGAVYFCFSSLSTIGLEDLLPGRGRSLHPVIYHLGQLALLGYLLLGLLAMLLAVETFSELPQVRAMGKFFRPSGPVTAEDQGGILGQDELALSTLPPAAPASGQAPAC.

At 1-10 (MGGLRPWSRY) the chain is on the cytoplasmic side. A helical membrane pass occupies residues 11–31 (GLLVVAHLLALGLGAVVFQAL). The N-linked (GlcNAc...) asparagine glycan is linked to Asn83. Residues 92 to 119 (LPSALLFAASILTTTGYGHMAPLSPGGK) constitute an intramembrane region (pore-forming). Residues 120–140 (AFCMVYAALGLPASLALVATL) traverse the membrane as a helical segment. The Cytoplasmic segment spans residues 141 to 170 (RHCLLPVLSRPRAWVAVHWQLSPARAALLQ). The chain crosses the membrane as a helical span at residues 171–191 (AVALGLLVASSFVLLPALVLW). Residues 199 to 227 (LLGAVYFCFSSLSTIGLEDLLPGRGRSLH) constitute an intramembrane region (pore-forming). Residues 233-253 (LGQLALLGYLLLGLLAMLLAV) traverse the membrane as a helical segment. The Cytoplasmic portion of the chain corresponds to 254 to 307 (ETFSELPQVRAMGKFFRPSGPVTAEDQGGILGQDELALSTLPPAAPASGQAPAC).

It belongs to the two pore domain potassium channel (TC 1.A.1.8) family. As to quaternary structure, homodimer.

Its subcellular location is the membrane. In terms of biological role, probable potassium channel subunit. No channel activity observed in vitro as protein remains in the endoplasmic reticulum. May need to associate with an as yet unknown partner in order to reach the plasma membrane. This is Potassium channel subfamily K member 7 (KCNK7) from Homo sapiens (Human).